Consider the following 191-residue polypeptide: Cytochrome b-245 light chain (191 aa).

The Cytoplasmic portion of the chain corresponds to 2 to 7; sequence GQIEWA. Residues 8–30 traverse the membrane as a helical segment; sequence MWANEQALASGLILITGGIVATA. Residues 31 to 35 lie on the Extracellular side of the membrane; the sequence is GQFTQ. Residues 36-53 traverse the membrane as a helical segment; it reads WYLGAYSIAAGVLVCLLE. Residues 54–69 are Cytoplasmic-facing; sequence YPRGKRSKGSTMERCG. Residues 70-80 lie within the membrane without spanning it; the sequence is QKYLTRVVKLF. At 81-86 the chain is on the cytoplasmic side; sequence GPLTRN. The helical transmembrane segment at 87 to 104 threads the bilayer; the sequence is YYIRAFLHLGLAVPAGFL. Position 105 (leucine 105) is a topological domain, extracellular. Residues 106–126 traverse the membrane as a helical segment; the sequence is ATILGTACLAIASGIYLLAAI. Residues 127–191 lie on the Cytoplasmic side of the membrane; it reads RGEQWSPIEP…NPMPVNDEVV (65 aa). Residues 134 to 191 are disordered; the sequence is IEPKPKERPQIGGTIKQPPSNPPPRPPAEARKKPSEEAAGVPTGGPQENPMPVNDEVV. Threonine 147 is subject to Phosphothreonine. Residue lysine 149 forms a Glycyl lysine isopeptide (Lys-Gly) (interchain with G-Cter in ubiquitin) linkage. Serine 168 carries the phosphoserine modification.

The protein belongs to the p22phox family. As to quaternary structure, component of the phagocyte NADPH oxidase core complex/cytochrome b558 complex, composed of CYBB (heavy chain (beta)) and CYBA (light chain (alpha)). Component of the phagocyte NADPH oxidase complex composed of an obligatory core heterodimer formed by the membrane proteins CYBA and CYBB and the cytosolic regulatory subunits NCF1/p47-phox, NCF2/p67-phox, NCF4/p40-phox and the small GTPase RAC1 or RAC2. Interacts with NCF1 (via SH3 domain). Interacts with SH3PXD2A. Interacts with DUOX1, DUOX2 and TPO. Interacts with NOX4; this interaction mediates superoxide generation. Interacts with calprotectin (S100A8/9). Interacts with GBP7. Interacts with NOXO1. Forms a heterodimer with NOX3 and is essential for activity and cell membrane localization of NOX3. Interacts with NOX1. In terms of processing, phosphorylation at Thr-147 enhances NADPH oxidase activity by promoting NCF1/p47-phox binding. Post-translationally, ubiquitinated at Lys-149 likely by RNF145.

It localises to the cell membrane. Subunit of NADPH oxidase complexes that is required for the NADPH oxidase activity that generates, in various cell types, superoxide from molecular oxygen utilizing NADPH as an electron donor. Subunit of the phagocyte NADPH oxidase complex that mediates the transfer of electrons from cytosolic NADPH to O2 to produce the superoxide anion (O2(-)). In the activated complex, electrons are first transferred from NADPH to flavin adenine dinucleotide (FAD) and subsequently transferred via two heme molecules to molecular oxygen, producing superoxide through an outer-sphere reaction. Activation of the NADPH oxidase complex is initiated by the assembly of cytosolic subunits of the NADPH oxidase complex with the core NADPH oxidase complex to form a complex at the plasma membrane or phagosomal membrane. This activation process is initiated by phosphorylation dependent binding of the cytosolic NCF1/p47-phox subunit to the C-terminus of CYBA/p22-phox. Aassociates with NOX3 to form a functional NADPH oxidase constitutively generating superoxide. The chain is Cytochrome b-245 light chain from Bos taurus (Bovine).